Reading from the N-terminus, the 365-residue chain is MLGSRRLRSPALVLLLLRPLLASGDSASRLQTRAMNPGGGERGSPEDSHRLQRSTVPGSDPQRSNELLLLTSREGDSPEQRHHVLYFPGDVQNYHEIMTRHPENYQWENWSLENIATILARRFPNSYIWVIKCSRMHLHKFSCYDNFVKSNMFGAPEHTPDFGAFKHLYMLLVNAFNLTQNGMLFKNRSVWNKDCKASNCESNPSTSNGGQKENERTCEHVDEPSMSFPPLSLDGASFTLIGFSKGCVVLNQLLFELKEAKKDKNIDAFIKSIRTMYWLDGGHSGGSNTWVTYPEVLEEFAQTGITVHTHVTPYQVHDPMRSWIGKEHKKFVQILRDLGMQVTSQIHFAKETPSIENHFRVHEVF.

Residues 1 to 24 (MLGSRRLRSPALVLLLLRPLLASG) constitute a mitochondrion transit peptide. The disordered stretch occupies residues 28–64 (SRLQTRAMNPGGGERGSPEDSHRLQRSTVPGSDPQRS). Over residues 53–64 (RSTVPGSDPQRS) the composition is skewed to polar residues.

It belongs to the C2orf69 family.

It is found in the mitochondrion matrix. Functionally, may play a role in the respiratory chain. The sequence is that of Mitochondrial protein C2orf69 homolog from Mus musculus (Mouse).